Here is a 330-residue protein sequence, read N- to C-terminus: Ketol-acid reductoisomerase (NADP(+)) (330 aa).

One can recognise a KARI N-terminal Rossmann domain in the interval 1–182; sequence MKKVYYDQDA…GCTRAGVFET (182 aa). NADP(+) is bound by residues 25-28, Ser-51, Ser-53, and 83-86; these read YGSQ and DQIQ. Residue His-108 is part of the active site. An NADP(+)-binding site is contributed by Gly-134. The KARI C-terminal knotted domain occupies 183–328; it reads TFKEETETDL…AELRQMMPWL (146 aa). Residues Asp-191, Glu-195, Glu-227, and Glu-231 each coordinate Mg(2+). Ser-252 is a substrate binding site.

The protein belongs to the ketol-acid reductoisomerase family. It depends on Mg(2+) as a cofactor.

The catalysed reaction is (2R)-2,3-dihydroxy-3-methylbutanoate + NADP(+) = (2S)-2-acetolactate + NADPH + H(+). It catalyses the reaction (2R,3R)-2,3-dihydroxy-3-methylpentanoate + NADP(+) = (S)-2-ethyl-2-hydroxy-3-oxobutanoate + NADPH + H(+). The protein operates within amino-acid biosynthesis; L-isoleucine biosynthesis; L-isoleucine from 2-oxobutanoate: step 2/4. Its pathway is amino-acid biosynthesis; L-valine biosynthesis; L-valine from pyruvate: step 2/4. In terms of biological role, involved in the biosynthesis of branched-chain amino acids (BCAA). Catalyzes an alkyl-migration followed by a ketol-acid reduction of (S)-2-acetolactate (S2AL) to yield (R)-2,3-dihydroxy-isovalerate. In the isomerase reaction, S2AL is rearranged via a Mg-dependent methyl migration to produce 3-hydroxy-3-methyl-2-ketobutyrate (HMKB). In the reductase reaction, this 2-ketoacid undergoes a metal-dependent reduction by NADPH to yield (R)-2,3-dihydroxy-isovalerate. This Carboxydothermus hydrogenoformans (strain ATCC BAA-161 / DSM 6008 / Z-2901) protein is Ketol-acid reductoisomerase (NADP(+)).